A 944-amino-acid polypeptide reads, in one-letter code: Protein translocase subunit SecA (944 aa).

ATP contacts are provided by residues Q90, 108–112 (GEGKT), and D509. Positions 533-565 (VKPEEGHKPPVSPQRKTKSAGFKEEKNKNLSIS) are disordered.

Belongs to the SecA family. In terms of assembly, monomer and homodimer. Part of the essential Sec protein translocation apparatus which comprises SecA, SecYEG and auxiliary proteins SecDF. Other proteins may also be involved.

The protein localises to the cell inner membrane. It localises to the cellular thylakoid membrane. It is found in the cytoplasm. It carries out the reaction ATP + H2O + cellular proteinSide 1 = ADP + phosphate + cellular proteinSide 2.. Its function is as follows. Part of the Sec protein translocase complex. Interacts with the SecYEG preprotein conducting channel. Has a central role in coupling the hydrolysis of ATP to the transfer of proteins into and across the cell membrane, serving as an ATP-driven molecular motor driving the stepwise translocation of polypeptide chains across the membrane. Probably participates in protein translocation into and across both the cytoplasmic and thylakoid membranes in cyanobacterial cells. The polypeptide is Protein translocase subunit SecA (Prochlorococcus marinus (strain NATL1A)).